The sequence spans 170 residues: ATP synthase subunit b (170 aa).

The chain crosses the membrane as a helical span at residues 20–42 (QLLAMLVLLALLKKFALGPLLNI).

This sequence belongs to the ATPase B chain family. As to quaternary structure, F-type ATPases have 2 components, F(1) - the catalytic core - and F(0) - the membrane proton channel. F(1) has five subunits: alpha(3), beta(3), gamma(1), delta(1), epsilon(1). F(0) has three main subunits: a(1), b(2) and c(10-14). The alpha and beta chains form an alternating ring which encloses part of the gamma chain. F(1) is attached to F(0) by a central stalk formed by the gamma and epsilon chains, while a peripheral stalk is formed by the delta and b chains.

Its subcellular location is the cell membrane. Its function is as follows. F(1)F(0) ATP synthase produces ATP from ADP in the presence of a proton or sodium gradient. F-type ATPases consist of two structural domains, F(1) containing the extramembraneous catalytic core and F(0) containing the membrane proton channel, linked together by a central stalk and a peripheral stalk. During catalysis, ATP synthesis in the catalytic domain of F(1) is coupled via a rotary mechanism of the central stalk subunits to proton translocation. Functionally, component of the F(0) channel, it forms part of the peripheral stalk, linking F(1) to F(0). This Bacillus velezensis (strain DSM 23117 / BGSC 10A6 / LMG 26770 / FZB42) (Bacillus amyloliquefaciens subsp. plantarum) protein is ATP synthase subunit b.